The following is a 200-amino-acid chain: NAD(P)H dehydrogenase (quinone) (200 aa).

Residues 4–191 (VLVLYYSSYG…DIARYQGKRV (188 aa)) form the Flavodoxin-like domain. Residues 10–15 (SSYGHV) and 79–81 (TRF) contribute to the FMN site. Residue Tyr12 participates in NAD(+) binding. Substrate is bound at residue Trp99. FMN is bound by residues 114–120 (STGTQHG) and His135.

This sequence belongs to the WrbA family. FMN serves as cofactor.

The catalysed reaction is a quinone + NADH + H(+) = a quinol + NAD(+). It catalyses the reaction a quinone + NADPH + H(+) = a quinol + NADP(+). The sequence is that of NAD(P)H dehydrogenase (quinone) from Burkholderia lata (strain ATCC 17760 / DSM 23089 / LMG 22485 / NCIMB 9086 / R18194 / 383).